Reading from the N-terminus, the 399-residue chain is Chaperone protein DnaJ 1 (399 aa).

Residues 10 to 75 form the J domain; the sequence is DYYKVLGVPK…KKRKEYDEAR (66 aa). A CR-type zinc finger spans residues 166–244; that stretch reads GATVPLRMSS…CKGSGRAKSS (79 aa). 8 residues coordinate Zn(2+): C179, C182, C195, C198, C218, C221, C232, and C235. CXXCXGXG motif repeat units lie at residues 179–186, 195–202, 218–225, and 232–239; these read CKACSGTG, CPTCVGTG, CPDCKGRG, and CEVCKGSG.

Belongs to the DnaJ family. In terms of assembly, homodimer. Requires Zn(2+) as cofactor.

It localises to the cytoplasm. Functionally, participates actively in the response to hyperosmotic and heat shock by preventing the aggregation of stress-denatured proteins and by disaggregating proteins, also in an autonomous, DnaK-independent fashion. Unfolded proteins bind initially to DnaJ; upon interaction with the DnaJ-bound protein, DnaK hydrolyzes its bound ATP, resulting in the formation of a stable complex. GrpE releases ADP from DnaK; ATP binding to DnaK triggers the release of the substrate protein, thus completing the reaction cycle. Several rounds of ATP-dependent interactions between DnaJ, DnaK and GrpE are required for fully efficient folding. Also involved, together with DnaK and GrpE, in the DNA replication of plasmids through activation of initiation proteins. This is Chaperone protein DnaJ 1 from Streptomyces coelicolor (strain ATCC BAA-471 / A3(2) / M145).